A 289-amino-acid polypeptide reads, in one-letter code: Bidirectional sugar transporter SWEET11 (289 aa).

Residues 1-9 (MSLFNTENT) lie on the Extracellular side of the membrane. The helical transmembrane segment at 10–30 (WAFVFGLLGNLISFAVFLSPV) threads the bilayer. The MtN3/slv 1 domain occupies 12–98 (FVFGLLGNLI…SMFLAYAPKP (87 aa)). The Cytoplasmic portion of the chain corresponds to 31 to 43 (PTFYRIWKKKTTE). The chain crosses the membrane as a helical span at residues 44 to 64 (GFQSIPYVVALFSATLWLYYA). The Extracellular portion of the chain corresponds to 65–70 (TQKKDV). A helical transmembrane segment spans residues 71–91 (FLLVTINAFGCFIETIYISMF). Residues 92–105 (LAYAPKPARMLTVK) are Cytoplasmic-facing. The helical transmembrane segment at 106–126 (MLLLMNFGGFCAILLLCQFLV) threads the bilayer. At 127–133 (KGATRAK) the chain is on the extracellular side. A helical transmembrane segment spans residues 134–154 (IIGGICVGFSVCVFAAPLSII). The 85-residue stretch at 134–218 (IIGGICVGFS…ILYVVYKYCK (85 aa)) folds into the MtN3/slv 2 domain. Residues 155 to 167 (RTVIKTRSVEYMP) are Cytoplasmic-facing. Residues 168-188 (FSLSLTLTISAVIWLLYGLAL) form a helical membrane-spanning segment. The Extracellular segment spans residues 189 to 192 (KDIY). Residues 193-213 (VAFPNVLGFALGALQMILYVV) form a helical membrane-spanning segment. Residues 214–289 (YKYCKTSPHL…GKQSSSAAAT (76 aa)) are Cytoplasmic-facing. The segment at 266-289 (DRRAEIEDGQTPKHGKQSSSAAAT) is disordered. Phosphothreonine is present on T276.

This sequence belongs to the SWEET sugar transporter family. Forms homooligomers and heterooligomers with SWEET1, SWEET3, SWEET5, SWEET6, SWEET7, SWEET8, SWEET9, SWEET12, SWEET13, SWEET15 and SWEET17. In terms of tissue distribution, expressed in leaves, especially in phloem. Expressed in developing seeds.

The protein localises to the cell membrane. Mediates both low-affinity uptake and efflux of sugar across the plasma membrane. Involved in phloem loading by mediating export from parenchyma cells feeding H(+)-coupled import into the sieve element/companion cell complex, thus contributing to the sucrose migration from sites of synthesis in the mesophyll to the phloem. Contributes to seed filling by triggering sucrose efflux involved in the transfer of sugars from seed coat to embryos. This is Bidirectional sugar transporter SWEET11 from Arabidopsis thaliana (Mouse-ear cress).